The following is a 598-amino-acid chain: NADH-ubiquinone oxidoreductase chain 5 (598 aa).

A run of 16 helical transmembrane segments spans residues 1-21, 28-48, 81-101, 115-135, 171-191, 193-213, 233-253, 265-285, 293-312, 323-343, 362-382, 399-421, 454-474, 480-500, 509-529, and 576-596; these read MLEL…IFLF, FAES…ILLM, CFFV…FYYM, GLFL…QLLI, GDIG…DWSF, GLYA…LAAA, TPVS…FLLI, IQLM…ICAL, VVAF…VGAG, MHAF…HGLQ, SVCF…AGFF, WAVG…LLYF, VIAG…CLSL, LAAV…VNLL, IPEL…HKLI, and LIKM…GIMI.

Belongs to the complex I subunit 5 family.

The protein resides in the mitochondrion inner membrane. The catalysed reaction is a ubiquinone + NADH + 5 H(+)(in) = a ubiquinol + NAD(+) + 4 H(+)(out). Core subunit of the mitochondrial membrane respiratory chain NADH dehydrogenase (Complex I) that is believed to belong to the minimal assembly required for catalysis. Complex I functions in the transfer of electrons from NADH to the respiratory chain. The immediate electron acceptor for the enzyme is believed to be ubiquinone. This chain is NADH-ubiquinone oxidoreductase chain 5 (ND5), found in Branchiostoma lanceolatum (Common lancelet).